Here is a 512-residue protein sequence, read N- to C-terminus: Photosystem II CP47 reaction center protein (512 aa).

Helical transmembrane passes span 21 to 36 (AVHL…WAGS), 101 to 115 (IVLS…IWHW), 140 to 156 (GIHL…FGAF), 203 to 218 (IAAG…FHLS), 237 to 252 (VLSS…AFVV), and 457 to 472 (TFAL…HGAR).

It belongs to the PsbB/PsbC family. PsbB subfamily. In terms of assembly, PSII is composed of 1 copy each of membrane proteins PsbA, PsbB, PsbC, PsbD, PsbE, PsbF, PsbH, PsbI, PsbJ, PsbK, PsbL, PsbM, PsbT, PsbX, PsbY, PsbZ, Psb30/Ycf12, at least 3 peripheral proteins of the oxygen-evolving complex and a large number of cofactors. It forms dimeric complexes. Binds multiple chlorophylls. PSII binds additional chlorophylls, carotenoids and specific lipids. is required as a cofactor.

The protein resides in the plastid. It is found in the chloroplast thylakoid membrane. In terms of biological role, one of the components of the core complex of photosystem II (PSII). It binds chlorophyll and helps catalyze the primary light-induced photochemical processes of PSII. PSII is a light-driven water:plastoquinone oxidoreductase, using light energy to abstract electrons from H(2)O, generating O(2) and a proton gradient subsequently used for ATP formation. The protein is Photosystem II CP47 reaction center protein of Physcomitrium patens (Spreading-leaved earth moss).